The chain runs to 62 residues: Photosystem II reaction center protein Z (62 aa).

Helical transmembrane passes span 8–28 (ALVA…VAYA) and 41–61 (WLGS…NFFV).

It belongs to the PsbZ family. In terms of assembly, PSII is composed of 1 copy each of membrane proteins PsbA, PsbB, PsbC, PsbD, PsbE, PsbF, PsbH, PsbI, PsbJ, PsbK, PsbL, PsbM, PsbT, PsbX, PsbY, PsbZ, Psb30/Ycf12, peripheral proteins PsbO, CyanoQ (PsbQ), PsbU, PsbV and a large number of cofactors. It forms dimeric complexes.

Its subcellular location is the cellular thylakoid membrane. May control the interaction of photosystem II (PSII) cores with the light-harvesting antenna, regulates electron flow through the 2 photosystem reaction centers. PSII is a light-driven water plastoquinone oxidoreductase, using light energy to abstract electrons from H(2)O, generating a proton gradient subsequently used for ATP formation. The protein is Photosystem II reaction center protein Z of Nostoc sp. (strain PCC 7120 / SAG 25.82 / UTEX 2576).